The primary structure comprises 430 residues: Probable carboxypeptidase AO090003000058 (430 aa).

The first 16 residues, M1–A16, serve as a signal peptide directing secretion. N84 carries N-linked (GlcNAc...) asparagine glycosylation. D156 provides a ligand contact to Zn(2+). E188 (proton acceptor) is an active-site residue. Residue E189 participates in Zn(2+) binding. N285 carries an N-linked (GlcNAc...) asparagine glycan.

The protein belongs to the peptidase M20A family. Zn(2+) serves as cofactor.

Its subcellular location is the secreted. This Aspergillus oryzae (strain ATCC 42149 / RIB 40) (Yellow koji mold) protein is Probable carboxypeptidase AO090003000058.